We begin with the raw amino-acid sequence, 211 residues long: MNPVASTSALNLARSLYEAGIRNEAVLRAVANTPREQFLEPALGHKAYENTALPIGQGQTISQPYIVARMTEIILQNKPSKVLEIGTGSGYQAAVLAQLVPQLCTVERIKSLQIQARQRLKKLDLHNVAFKYGDGWQGWPSKGPYDAIMVTAAASSVPEALVAQLADGGVLVIPVGELSQQLLKLTRVGNQFTSEVIENVRFVPLVSGELA.

The active site involves Ser-62.

Belongs to the methyltransferase superfamily. L-isoaspartyl/D-aspartyl protein methyltransferase family.

It is found in the cytoplasm. The enzyme catalyses [protein]-L-isoaspartate + S-adenosyl-L-methionine = [protein]-L-isoaspartate alpha-methyl ester + S-adenosyl-L-homocysteine. Functionally, catalyzes the methyl esterification of L-isoaspartyl residues in peptides and proteins that result from spontaneous decomposition of normal L-aspartyl and L-asparaginyl residues. It plays a role in the repair and/or degradation of damaged proteins. In Shewanella pealeana (strain ATCC 700345 / ANG-SQ1), this protein is Protein-L-isoaspartate O-methyltransferase.